A 198-amino-acid polypeptide reads, in one-letter code: Holliday junction branch migration complex subunit RuvA (198 aa).

Residues 1 to 63 (MYDYIKGQLT…EDAQLLFGFH (63 aa)) are domain I. The segment at 64–142 (SEEEKDVFLK…EAPKEESSKL (79 aa)) is domain II. The interval 143 to 147 (PKAKH) is flexible linker. The segment at 148-198 (QENEQLDEAIEALLALGYKATELKKIRAFFEGTSETAEQYIKSALKMLMKG) is domain III.

Belongs to the RuvA family. In terms of assembly, homotetramer. Forms an RuvA(8)-RuvB(12)-Holliday junction (HJ) complex. HJ DNA is sandwiched between 2 RuvA tetramers; dsDNA enters through RuvA and exits via RuvB. An RuvB hexamer assembles on each DNA strand where it exits the tetramer. Each RuvB hexamer is contacted by two RuvA subunits (via domain III) on 2 adjacent RuvB subunits; this complex drives branch migration. In the full resolvosome a probable DNA-RuvA(4)-RuvB(12)-RuvC(2) complex forms which resolves the HJ.

The protein localises to the cytoplasm. In terms of biological role, the RuvA-RuvB-RuvC complex processes Holliday junction (HJ) DNA during genetic recombination and DNA repair, while the RuvA-RuvB complex plays an important role in the rescue of blocked DNA replication forks via replication fork reversal (RFR). RuvA specifically binds to HJ cruciform DNA, conferring on it an open structure. The RuvB hexamer acts as an ATP-dependent pump, pulling dsDNA into and through the RuvAB complex. HJ branch migration allows RuvC to scan DNA until it finds its consensus sequence, where it cleaves and resolves the cruciform DNA. The polypeptide is Holliday junction branch migration complex subunit RuvA (Streptococcus equi subsp. zooepidemicus (strain MGCS10565)).